Consider the following 800-residue polypeptide: Nucleolar complex protein 3 homolog (800 aa).

Composition is skewed to basic residues over residues 1 to 19 and 42 to 53; these read MGPASKRNKKKRPSFRKLL and KKQRKEQRKLHK. 2 disordered regions span residues 1–91 and 167–197; these read MGPA…TDMM and KPVLPQAEEEEEEPNQEVYLQKEEEPESAPL. Basic and acidic residues predominate over residues 65-74; it reads PLERYKKRPE. The stretch at 449–490 forms a coiled coil; that stretch reads SFKEKRKNLSRMQRKWKKAEEKLQKELLEAEATESKEKKIKL. A disordered region spans residues 780 to 800; that stretch reads LQEEPEQMSLDFTSPHTQQEP. Over residues 789–800 the composition is skewed to polar residues; sequence LDFTSPHTQQEP.

The protein belongs to the CBF/MAK21 family.

It localises to the nucleus. Its subcellular location is the nucleolus. The chain is Nucleolar complex protein 3 homolog (noc3l) from Danio rerio (Zebrafish).